We begin with the raw amino-acid sequence, 187 residues long: Putative zinc finger protein 833 (187 aa).

6 C2H2-type zinc fingers span residues 10–32 (YKCK…ERTH), 38–60 (YECN…ARIH), 66–88 (YICK…ENTH), 94–116 (CECK…ERIH), 122–144 (YKCK…KSTH), and 150–172 (YECK…EGVH).

The chain is Putative zinc finger protein 833 (ZNF833P) from Homo sapiens (Human).